The chain runs to 386 residues: MYLTKEEELILAGEYGYALQKAMEILVALGDIYGADRLIPIKSAQVAGVSYKNIGDAGIEFLRDFVEAGAKVSVYTTLNPAGIGDDEFMEKQMEVLELYRKMGIEVTSTCTPYYGANLPKFGDHIAWSESSAVSFANSILGARTNREGGPSSLAAAIVGKTPNYGLHLDENRKATVIVDVKAKVKTFADYSVLGYHVGKTLGNDVPYFKNLKPEKTEFLKELGAAMGATGSIALYHVEGETPEYREAITDKLETITVEDSDLKAVRESFQDDWSDIDMILIGCPHASLPEVKEIAELLRMRGKPLKIPLFITASRAVKALADALGYTEIIERYNGKIIPDSCFVVSPIKGWYRGIATNSGKSAFYFRSFGFSVRLDDVENLIKEAP.

G48, V49, S50, N53, R63, N79, and P80 together coordinate (R)-5-phosphomevalonate. Residue C110 participates in [4Fe-4S] cluster binding. Residues E129 and S130 each contribute to the (R)-5-phosphomevalonate site. 2 residues coordinate [4Fe-4S] cluster: C283 and C342. (R)-5-phosphomevalonate is bound at residue K361.

This sequence belongs to the AcnX type II large subunit family. As to quaternary structure, heterodimer composed of a large subunit (PMDh-L) and a small subunit (PMDh-S). [4Fe-4S] cluster is required as a cofactor.

It catalyses the reaction (R)-5-phosphomevalonate = (2E)-3-methyl-5-phosphooxypent-2-enoate + H2O. The protein operates within isoprenoid biosynthesis; isopentenyl diphosphate biosynthesis via mevalonate pathway. Functionally, component of a hydro-lyase that catalyzes the dehydration of mevalonate 5-phosphate (MVA5P) to form trans-anhydromevalonate 5-phosphate (tAHMP). Involved in the archaeal mevalonate (MVA) pathway, which provides fundamental precursors for isoprenoid biosynthesis, such as isopentenyl diphosphate (IPP) and dimethylallyl diphosphate (DMAPP). The protein is Phosphomevalonate dehydratase large subunit of Thermococcus kodakarensis (strain ATCC BAA-918 / JCM 12380 / KOD1) (Pyrococcus kodakaraensis (strain KOD1)).